Consider the following 749-residue polypeptide: 1,4-alpha-glucan branching enzyme GlgB (749 aa).

Asp427 serves as the catalytic Nucleophile. Glu480 serves as the catalytic Proton donor.

It belongs to the glycosyl hydrolase 13 family. GlgB subfamily. Monomer.

The enzyme catalyses Transfers a segment of a (1-&gt;4)-alpha-D-glucan chain to a primary hydroxy group in a similar glucan chain.. The protein operates within glycan biosynthesis; glycogen biosynthesis. In terms of biological role, catalyzes the formation of the alpha-1,6-glucosidic linkages in glycogen by scission of a 1,4-alpha-linked oligosaccharide from growing alpha-1,4-glucan chains and the subsequent attachment of the oligosaccharide to the alpha-1,6 position. The sequence is that of 1,4-alpha-glucan branching enzyme GlgB from Thermobifida fusca (strain YX).